A 356-amino-acid chain; its full sequence is MSRYWSDIVRQLEPYVPGEQPALAHPVKLNTNENPYPPSPRALDAIRRELGDTGEALRRYPDPVARRLRETVAAYHGIAPEQVFAGNGSDEVLAHAFQALLQHDRPLRFPDITYSFYPTYARLYRVAYETVPLAGDFSIVVDDYLDDAGCVLFPNPNAPTGRALPLADIERIVAANPSSVVVIDEAYVDFGAESAVSLIARYPNLLVVHTVSKARSLAGMRVGFAFGDAALIDALTRVKDSFNSYPLDRLAQVATQASYEDEAWFQATRKQVIASRERLVGALAALGFDVVPSAANFVFARPRSHDAATLAAQLKQREIFVRHFKLPRIDQHLRITVGSDAECDALVAALRELLAA.

Lysine 213 carries the N6-(pyridoxal phosphate)lysine modification.

This sequence belongs to the class-II pyridoxal-phosphate-dependent aminotransferase family. Histidinol-phosphate aminotransferase subfamily. Homodimer. Pyridoxal 5'-phosphate is required as a cofactor.

The enzyme catalyses L-histidinol phosphate + 2-oxoglutarate = 3-(imidazol-4-yl)-2-oxopropyl phosphate + L-glutamate. The protein operates within amino-acid biosynthesis; L-histidine biosynthesis; L-histidine from 5-phospho-alpha-D-ribose 1-diphosphate: step 7/9. In Burkholderia mallei (strain ATCC 23344), this protein is Histidinol-phosphate aminotransferase 2.